The primary structure comprises 466 residues: MSNGTIVQCIGAVVDIQFPRDQMPKIYEALTLADDTSQFAEKGLTLEVQQQLGDGVVRTIALGSSDGLRRGMKVVGTGAPISVPVGHGTLGRIMDVLGRPIDEAGPIESDEKRAIHQTAPRFDELSPSVELLETGIKVIDLVCPFAKGGKVGLFGGAGVGKTVNMMELINNIAKQHSGLSVFAGVGERTREGNDFYHEMEESKVLDKVAMVFGQMNEPPGNRLRVALTGLTMAEKFRDEGRDILFFVDNIYRYTLAGTEVSALLGRMPSAVGYQPTLAEEMGVLQERITSTKTGSITSIQAVYVPADDLTDPSPATTFQHLDSTVVLSRDIAALGIYPAVDPLDSSSRQLDPQVVGEEHYAVARGVQQTLQRYKELRDIIAILGMDELSPDDKQAVARARKIQRFLSQPFHVAEVFTGSPGKYVPLAETIRGFKMIVDGECDALPEQAFYMVGTIDEAFEKAKKLQ.

155 to 162 contributes to the ATP binding site; that stretch reads GGAGVGKT.

Belongs to the ATPase alpha/beta chains family. In terms of assembly, F-type ATPases have 2 components, CF(1) - the catalytic core - and CF(0) - the membrane proton channel. CF(1) has five subunits: alpha(3), beta(3), gamma(1), delta(1), epsilon(1). CF(0) has three main subunits: a(1), b(2) and c(9-12). The alpha and beta chains form an alternating ring which encloses part of the gamma chain. CF(1) is attached to CF(0) by a central stalk formed by the gamma and epsilon chains, while a peripheral stalk is formed by the delta and b chains.

The protein localises to the cell inner membrane. It carries out the reaction ATP + H2O + 4 H(+)(in) = ADP + phosphate + 5 H(+)(out). Functionally, produces ATP from ADP in the presence of a proton gradient across the membrane. The catalytic sites are hosted primarily by the beta subunits. The chain is ATP synthase subunit beta from Bordetella petrii (strain ATCC BAA-461 / DSM 12804 / CCUG 43448).